A 329-amino-acid polypeptide reads, in one-letter code: Flotillin-like protein FloA (329 aa).

Residues 4-24 (IWGFLILILVLIFLGVFFSFV) form a helical membrane-spanning segment.

It belongs to the flotillin-like FloA family. Homooligomerizes.

The protein localises to the cell membrane. It is found in the membrane raft. Found in functional membrane microdomains (FMM) that may be equivalent to eukaryotic membrane rafts. FMMs are highly dynamic and increase in number as cells age. Flotillins are thought to be important factors in membrane fluidity. In Dictyoglomus turgidum (strain DSM 6724 / Z-1310), this protein is Flotillin-like protein FloA.